The sequence spans 198 residues: Ribonuclease HII (198 aa).

Residues 11 to 198 (NLIAGVDEVG…GPVKRVLGLV (188 aa)) enclose the RNase H type-2 domain. The a divalent metal cation site is built by aspartate 17, glutamate 18, and aspartate 109.

Belongs to the RNase HII family. It depends on Mn(2+) as a cofactor. The cofactor is Mg(2+).

The protein localises to the cytoplasm. It carries out the reaction Endonucleolytic cleavage to 5'-phosphomonoester.. Functionally, endonuclease that specifically degrades the RNA of RNA-DNA hybrids. This is Ribonuclease HII from Yersinia pseudotuberculosis serotype O:1b (strain IP 31758).